A 673-amino-acid chain; its full sequence is Synaptotagmin-like protein 4 (673 aa).

Positions 4–122 (ILDLSFLSEM…KATGDWFYDQ (119 aa)) constitute a RabBD domain. The FYVE-type zinc finger occupies 63-105 (CARCQEGLGRLIPKSSTCVGCNHLVCRECRVLESNGSWRCKVC). Residues 184–253 (FEVPKTRSGK…PGNQNAVCGD (70 aa)) are disordered. Residues serine 202, serine 205, serine 218, serine 222, and serine 275 each carry the phosphoserine modification. The C2 1 domain occupies 358–480 (VTGKIAFSLK…KLDKKLDHCL (123 aa)). Residue serine 490 is modified to Phosphoserine. Residues 509–635 (PASKLPVGGD…ISNGEVVDWM (127 aa)) form the C2 2 domain.

Part of a ternary complex containing STX1A and RAB27A. Can bind both dominant negative and dominant active mutants of RAB27A. Binds STXBP1, RAB3A, RAB8A and RAB27B. Interacts with MYO5A. As to expression, detected in the pancreatic islet, in particular in insulin-positive beta cells, and in pituitary.

It localises to the membrane. The protein resides in the cytoplasmic vesicle. It is found in the secretory vesicle membrane. Modulates exocytosis of dense-core granules and secretion of hormones in the pancreas and the pituitary. Interacts with vesicles containing negatively charged phospholipids in a Ca(2+)-independent manner. The protein is Synaptotagmin-like protein 4 (Sytl4) of Mus musculus (Mouse).